A 357-amino-acid chain; its full sequence is DNA integrity scanning protein DisA (357 aa).

Positions Val8–Ile146 constitute a DAC domain. Residues Gly75, Leu93, and Met106–Thr110 each bind ATP.

Belongs to the DisA family. In terms of assembly, homooctamer. Requires Mg(2+) as cofactor.

It catalyses the reaction 2 ATP = 3',3'-c-di-AMP + 2 diphosphate. Its function is as follows. Participates in a DNA-damage check-point that is active prior to asymmetric division when DNA is damaged. DisA forms globular foci that rapidly scan along the chromosomes during sporulation, searching for lesions. When a lesion is present, DisA pauses at the lesion site. This triggers a cellular response that culminates in a temporary block in sporulation initiation. Also has diadenylate cyclase activity, catalyzing the condensation of 2 ATP molecules into cyclic di-AMP (c-di-AMP). c-di-AMP acts as a signaling molecule that couples DNA integrity with progression of sporulation. The rise in c-di-AMP level generated by DisA while scanning the chromosome, operates as a positive signal that advances sporulation; upon encountering a lesion, the DisA focus arrests at the damaged site and halts c-di-AMP synthesis. This is DNA integrity scanning protein DisA from Bacillus cereus (strain G9842).